The following is a 1129-amino-acid chain: Regulator of nonsense transcripts 1 (1129 aa).

The tract at residues methionine 1–glutamate 415 is sufficient for interaction with RENT2. 2 positions are modified to phosphoserine: serine 10 and serine 31. Residues threonine 39–alanine 70 are disordered. The span at glycine 52–alanine 69 shows a compositional bias: gly residues. Positions threonine 115–asparagine 272 constitute a Upf1 CH-rich domain. The Zn(2+) site is built by cysteine 123, cysteine 126, cysteine 137, serine 140, cysteine 145, histidine 155, histidine 159, cysteine 165, cysteine 183, cysteine 186, cysteine 209, and cysteine 213. The interval cysteine 123–histidine 155 is C3H. The segment at cysteine 137 to cysteine 165 is CC/SHH/C. Residues cysteine 183 to cysteine 213 form a C4 region. ATP-binding positions include glutamine 486 and glycine 506–threonine 510. At serine 565 the chain carries Phosphoserine. Positions 676, 713, and 844 each coordinate ATP. Phosphoserine is present on serine 956. 2 disordered regions span residues phenylalanine 1009–glutamine 1058 and serine 1073–aspartate 1096. The residue at position 1019 (arginine 1019) is an Omega-N-methylarginine. The span at lysine 1025–asparagine 1034 shows a compositional bias: basic residues. Positions proline 1041 to glutamine 1058 are enriched in polar residues. Over residues serine 1073–proline 1086 the composition is skewed to low complexity. Serine 1089, serine 1107, serine 1110, and serine 1127 each carry phosphoserine. Short sequence motifs ([ST]-Q motif) lie at residues serine 1089–glutamine 1090 and serine 1107–glutamine 1108. The disordered stretch occupies residues serine 1110–tyrosine 1129.

It belongs to the DNA2/NAM7 helicase family. In terms of assembly, found in a post-splicing messenger ribonucleoprotein (mRNP) complex. Associates with the exon junction complex (EJC). Associates with the SGM1C complex; is phosphorylated by the complex kinase component SGM1. Part of a complex composed of SMG1, DHX34 and UPF1; within the complex DHX34 acts as a scaffolding protein to facilitate SMG1 phosphorylation of UPF1. Interacts with UPF2. Interacts with UPF3A and UPF3B. Interacts with EST1A. Interacts with SLBP. Interacts (when hyperphosphorylated) with PNRC2. Interacts with AGO1 and AGO2. Interacts with GSPT2. Interacts with isoform 1 and isoform 5 of ADAR/ADAR1. Interacts with SMG7. Interacts with ZC3H12A; this interaction occurs in a mRNA translationally active- and termination-dependent manner and is essential for ZC3H12A-mediated degradation of target mRNAs. Interacts with CPSF6. Interacts with MOV10; the interaction is direct and RNA-dependent. Interacts with SHFL; the interaction increases in the presence of RNA. Interacts with UPF2 and DDX4; interactions are mediated by TDRD6. Interacts with DHX34 and PABPC1/PABP1; the interactions are RNA-independent. Interacts with RBM46. As to quaternary structure, (Microbial infection) Interacts with human T-cell leukemia virus 1/HTLV-1 protein Tax; this interaction inhibits the host nonsense-mediated mRNA decay (NMD). Post-translationally, phosphorylated by SMG1; required for formation of mRNA surveillance complexes. As to expression, ubiquitous.

It localises to the cytoplasm. Its subcellular location is the P-body. The protein localises to the nucleus. It is found in the perinuclear region. It catalyses the reaction ATP + H2O = ADP + phosphate + H(+). RNA-dependent helicase required for nonsense-mediated decay (NMD) of aberrant mRNAs containing premature stop codons and modulates the expression level of normal mRNAs. Is recruited to mRNAs upon translation termination and undergoes a cycle of phosphorylation and dephosphorylation; its phosphorylation appears to be a key step in NMD. Recruited by release factors to stalled ribosomes together with the SMG1C protein kinase complex to form the transient SURF (SMG1-UPF1-eRF1-eRF3) complex. In EJC-dependent NMD, the SURF complex associates with the exon junction complex (EJC) (located 50-55 or more nucleotides downstream from the termination codon) through UPF2 and allows the formation of an UPF1-UPF2-UPF3 surveillance complex which is believed to activate NMD. Phosphorylated UPF1 is recognized by EST1B/SMG5, SMG6 and SMG7 which are thought to provide a link to the mRNA degradation machinery involving exonucleolytic and endonucleolytic pathways, and to serve as adapters to protein phosphatase 2A (PP2A), thereby triggering UPF1 dephosphorylation and allowing the recycling of NMD factors. UPF1 can also activate NMD without UPF2 or UPF3, and in the absence of the NMD-enhancing downstream EJC indicative for alternative NMD pathways. Plays a role in replication-dependent histone mRNA degradation at the end of phase S; the function is independent of UPF2. For the recognition of premature termination codons (PTC) and initiation of NMD a competitive interaction between UPF1 and PABPC1 with the ribosome-bound release factors is proposed. The ATPase activity of UPF1 is required for disassembly of mRNPs undergoing NMD. Together with UPF2 and dependent on TDRD6, mediates the degradation of mRNA harboring long 3'UTR by inducing the NMD machinery. Also capable of unwinding double-stranded DNA and translocating on single-stranded DNA. This Homo sapiens (Human) protein is Regulator of nonsense transcripts 1.